The sequence spans 544 residues: Zinc finger protein 502 (544 aa).

Residue Lys-43 forms a Glycyl lysine isopeptide (Lys-Gly) (interchain with G-Cter in SUMO2) linkage. 14 consecutive C2H2-type zinc fingers follow at residues 155-177 (WKCN…QRTH), 183-205 (YTCE…QRIH), 211-233 (YGCE…QRIH), 239-261 (YKCN…QRIH), 267-289 (YKCN…QRIH), 295-317 (YICS…QRIH), 323-345 (HKCD…QRIH), 351-373 (YKCK…QRIH), 379-401 (YKCK…QRIH), 407-429 (YKCS…QRSH), 435-457 (YKCN…MRIH), 463-485 (YKCK…HRTH), 491-513 (YKCS…YRIH), and 519-541 (YECI…QKLH).

This sequence belongs to the krueppel C2H2-type zinc-finger protein family. (Microbial infection) Interacts with human respiratory syncytial virus (HRSV) matrix protein; this interaction probably facilitates viral release.

It localises to the nucleus. May be involved in transcriptional regulation. The sequence is that of Zinc finger protein 502 (ZNF502) from Homo sapiens (Human).